A 173-amino-acid chain; its full sequence is RNA silencing suppressor p19 (173 aa).

The segment covering 1-21 has biased composition (basic and acidic residues); sequence MERAIQRSDAREQANSERWDG. Positions 1–34 are disordered; sequence MERAIQRSDAREQANSERWDGRCGGTITPFKLPD.

It belongs to the tombusvirus protein p19 family. Homodimer.

Functionally, viral suppressor of RNA silencing which binds specifically to silencing RNAs (siRNAs). Acts as a molecular caliper to specifically select siRNAs based on the length of the duplex region of the RNA. This Cucumis sativus (Cucumber) protein is RNA silencing suppressor p19.